Here is a 219-residue protein sequence, read N- to C-terminus: uncharacterized protein (219 aa).

A signal peptide spans 1 to 17 (MFKKIIILFLGIFLLSS). The N-palmitoyl cysteine moiety is linked to residue C18. A lipid anchor (S-diacylglycerol cysteine) is attached at C18. Residues 110–136 (KAESNATQSNNDMTLSKANKKVRKDDS) form a disordered region. A compositionally biased stretch (polar residues) spans 112-126 (ESNATQSNNDMTLSK). Positions 137–165 (YKEKKIEEELNQIKAMLRETKRDITKYTC) form a coiled coil.

It is found in the cell membrane. This is an uncharacterized protein from Rickettsia prowazekii (strain Madrid E).